The sequence spans 715 residues: ATP-binding cassette sub-family B member 10, mitochondrial (715 aa).

The transit peptide at Met1–Leu82 directs the protein to the mitochondrion. Residues Ala83–Arg133 lie on the Mitochondrial matrix side of the membrane. A helical transmembrane segment spans residues Gly134–Leu157. The ABC transmembrane type-1 domain maps to Leu136–Lys422. Topologically, residues Gly158–Arg178 are mitochondrial intermembrane. Residues Leu179 to Met201 form a helical membrane-spanning segment. At Gln202–Thr252 the chain is on the mitochondrial matrix side. The residue at position 230 (Lys230) is an N6-acetyllysine. The chain crosses the membrane as a helical span at residues Glu253–Val275. At Ser276–Ser278 the chain is on the mitochondrial intermembrane side. Residues Leu279–Gly298 traverse the membrane as a helical segment. Residues Arg299–Ala357 lie on the Mitochondrial matrix side of the membrane. A helical transmembrane segment spans residues Leu358–Lys381. The Mitochondrial intermembrane portion of the chain corresponds to Gly382–Glu395. A helical membrane pass occupies residues Leu396–Tyr417. Residues Ser418–Ala715 are Mitochondrial matrix-facing. Positions Leu457 to Asn696 constitute an ABC transporter domain. The ATP site is built by Gly495, Gly497, Lys498, Ser499, and Thr500. Ser499 provides a ligand contact to Mg(2+). Cys547 is modified (S-glutathionyl cysteine). Asp623 is a binding site for Mg(2+).

The protein belongs to the ABC transporter superfamily. ABCB family. Mitochondrial peptide exporter (TC 3.A.1.212) subfamily. Homodimer or homooligomer. Interacts with PAAT; this interaction regulates ABCB10. Interacts with SLC25A37; this interaction stabilizes SLC25A37 and enhances the function of SLC25A37 to import mitochondrial iron during erythroid differentiation. Interacts with FECH; this interaction may allow the formation of the oligomeric complex with SLC25A37. Forms a complex with ABCB7 and FECH, where a dimeric FECH bridges ABCB7 and ABCB10 homodimers; this complex may be required for cellular iron homeostasis, mitochondrial function and heme biosynthesis. In terms of tissue distribution, expressed at particularly high levels in fetal liver, and erythroid tissues of embryos and adults. Found also in adult bone marrow, liver and kidney, and at lower levels in heart, brain and spleen.

The protein resides in the mitochondrion inner membrane. The catalysed reaction is biliverdin IXalpha(in) + ATP + H2O = biliverdin IXalpha(out) + ADP + phosphate + H(+). With respect to regulation, oxidized glutathione (GSSG) stimulates ATP hydrolysis without affecting ATP binding, whereas reduced glutathione (GSH) inhibits ATP binding and hydrolysis. Functionally, ATP-dependent transporter located in the mitochondrial inner membrane that catalyzes the export of biliverdin from the mitochondrial matrix, and plays a crucial role in hemoglobin synthesis and antioxidative stress. Participates in the early step of the heme biosynthetic process during insertion of iron into protoporphyrin IX (PPIX). Involved in the stabilization of the iron transporter mitoferrin-1/SLC25A37. In addition may be involved in mitochondrial unfolded protein response (UPRmt) signaling pathway, although ABCB10 probably does not participate in peptide export from mitochondria. In Mus musculus (Mouse), this protein is ATP-binding cassette sub-family B member 10, mitochondrial.